The chain runs to 158 residues: MHTRAIYPGTFDPVTNGHADLIERAAKLFKHVVIGIAANPSKKPRFTLEERVALLQLVTSHLDNVEVVGFSGLLVDFAKEQKASVLVRGLRAVSDFEYEFQLANMNRRLSSDLESVFLTPAEENSFISSTLVKEVAHHGGDVSQFVHPEVAKALMTNV.

Threonine 10 contributes to the substrate binding site. ATP-binding positions include 10 to 11 (TF) and histidine 18. Residues lysine 42, leucine 74, and arginine 88 each coordinate substrate. Residues 89 to 91 (GLR), glutamate 99, and 124 to 130 (NSFISST) contribute to the ATP site.

This sequence belongs to the bacterial CoaD family. Homohexamer. It depends on Mg(2+) as a cofactor.

It is found in the cytoplasm. The enzyme catalyses (R)-4'-phosphopantetheine + ATP + H(+) = 3'-dephospho-CoA + diphosphate. The protein operates within cofactor biosynthesis; coenzyme A biosynthesis; CoA from (R)-pantothenate: step 4/5. In terms of biological role, reversibly transfers an adenylyl group from ATP to 4'-phosphopantetheine, yielding dephospho-CoA (dPCoA) and pyrophosphate. In Shewanella sediminis (strain HAW-EB3), this protein is Phosphopantetheine adenylyltransferase.